A 167-amino-acid chain; its full sequence is Phospholipase A and acyltransferase 1 (167 aa).

Residues 1 to 138 (MAVNDCFSLT…GEGVSEQANR (138 aa)) are Cytoplasmic-facing. The LRAT domain maps to 20 to 135 (LIEVFRPCYQ…LRYGEGVSEQ (116 aa)). His30 is an active-site residue. Cys119 serves as the catalytic Acyl-thioester intermediate. The helical transmembrane segment at 139-159 (AIGTIGLVAAGIDIFTFLGLF) threads the bilayer. Residues 160 to 167 (PKRQRTKY) are Lumenal-facing.

This sequence belongs to the H-rev107 family. As to expression, expressed in skeletal muscle, heart, brain, bone marrow and testis. Abundantly expressed in brain, heart, and skeletal muscle.

It is found in the membrane. The protein resides in the cytoplasm. It localises to the nucleus. It catalyses the reaction a 1,2-diacyl-sn-glycero-3-phosphocholine + H2O = a 1-acyl-sn-glycero-3-phosphocholine + a fatty acid + H(+). The catalysed reaction is a 1,2-diacyl-sn-glycero-3-phosphocholine + H2O = a 2-acyl-sn-glycero-3-phosphocholine + a fatty acid + H(+). It carries out the reaction 1,2-dihexadecanoyl-sn-glycero-3-phosphocholine + H2O = 2-hexadecanoyl-sn-glycero-3-phosphocholine + hexadecanoate + H(+). The enzyme catalyses 1,2-dihexadecanoyl-sn-glycero-3-phosphocholine + H2O = 1-hexadecanoyl-sn-glycero-3-phosphocholine + hexadecanoate + H(+). It catalyses the reaction 1-hexadecanoyl-2-(5Z,8Z,11Z,14Z-eicosatetraenoyl)-sn-glycero-3-phosphoethanolamine + H2O = 2-(5Z,8Z,11Z,14Z)-eicosatetraenoyl-sn-glycero-3-phosphoethanolamine + hexadecanoate + H(+). The catalysed reaction is 1-hexadecanoyl-2-(5Z,8Z,11Z,14Z-eicosatetraenoyl)-sn-glycero-3-phosphoethanolamine + H2O = 1-hexadecanoyl-sn-glycero-3-phosphoethanolamine + (5Z,8Z,11Z,14Z)-eicosatetraenoate + H(+). It carries out the reaction 1,2-di-(9Z-octadecenoyl)-sn-glycero-3-phosphoethanolamine + 1,2-dihexadecanoyl-sn-glycero-3-phosphocholine = hexadecanoyl-sn-glycero-3-phosphocholine + N-hexadecanoyl-1,2-di-(9Z-octadecenoyl)-sn-glycero-3-phosphoethanolamine + H(+). The enzyme catalyses 1,2-dihexadecanoyl-sn-glycero-3-phosphocholine + a 2-acyl-sn-glycero-3-phosphocholine = a 1-hexadecanoyl-2-acyl-sn-glycero-3-phosphocholine + 2-hexadecanoyl-sn-glycero-3-phosphocholine. Its function is as follows. Exhibits both phospholipase A1/2 and acyltransferase activities. Shows phospholipase A1 (PLA1) and A2 (PLA2) activity, catalyzing the calcium-independent release of fatty acids from the sn-1 or sn-2 position of glycerophospholipids. Shows O-acyltransferase activity, catalyzing the transfer of a fatty acyl group from glycerophospholipid to the hydroxyl group of lysophospholipid. Shows N-acyltransferase activity, catalyzing the calcium-independent transfer of a fatty acyl group at the sn-1 position of phosphatidylcholine (PC) and other glycerophospholipids to the primary amine of phosphatidylethanolamine (PE), forming N-acylphosphatidylethanolamine (NAPE), which serves as precursor for N-acylethanolamines (NAEs). In Mus musculus (Mouse), this protein is Phospholipase A and acyltransferase 1.